The chain runs to 78 residues: DNA-directed RNA polymerase subunit Rpo5 (78 aa).

The protein belongs to the archaeal Rpo5/eukaryotic RPB5 RNA polymerase subunit family. In terms of assembly, part of the RNA polymerase complex.

The protein resides in the cytoplasm. It catalyses the reaction RNA(n) + a ribonucleoside 5'-triphosphate = RNA(n+1) + diphosphate. DNA-dependent RNA polymerase (RNAP) catalyzes the transcription of DNA into RNA using the four ribonucleoside triphosphates as substrates. The polypeptide is DNA-directed RNA polymerase subunit Rpo5 (Methanosarcina mazei (strain ATCC BAA-159 / DSM 3647 / Goe1 / Go1 / JCM 11833 / OCM 88) (Methanosarcina frisia)).